Here is a 245-residue protein sequence, read N- to C-terminus: 3-deoxy-manno-octulosonate cytidylyltransferase (245 aa).

The protein belongs to the KdsB family.

It localises to the cytoplasm. The enzyme catalyses 3-deoxy-alpha-D-manno-oct-2-ulosonate + CTP = CMP-3-deoxy-beta-D-manno-octulosonate + diphosphate. It participates in nucleotide-sugar biosynthesis; CMP-3-deoxy-D-manno-octulosonate biosynthesis; CMP-3-deoxy-D-manno-octulosonate from 3-deoxy-D-manno-octulosonate and CTP: step 1/1. It functions in the pathway bacterial outer membrane biogenesis; lipopolysaccharide biosynthesis. Activates KDO (a required 8-carbon sugar) for incorporation into bacterial lipopolysaccharide in Gram-negative bacteria. This Acaryochloris marina (strain MBIC 11017) protein is 3-deoxy-manno-octulosonate cytidylyltransferase.